A 519-amino-acid polypeptide reads, in one-letter code: MKPYYVTTAIAYPNAAPHVGHAYEYIATDAIARFKRLDGYDVRFLTGTDEHGLKVAQAAAAAGVPTAALARRNSDVFQRMQEALNISFDRFIRTTDADHHEASKELWRRMSAAGDIYLDNYSGWYSVRDERFFVESETQLVDGTRLTVETGTPVTWTEEQTYFFRLSAYTDKLLAHYHANPDFIAPETRRNEVISFVSGGLDDLSISRTSFDWGVQVPEHPDHVMYVWVDALTNYLTGAGFPDTDSELFRRYWPADLHMIGKDIIRFHAVYWPAFLMSAGIELPRRIFAHGFLHNRGEKMSKSVGNIVDPVALAEALGVDQVRYFLLREVPFGQDGSYSDEAIVTRINTDLANELGNLAQRSLSMVAKNLDGRVPNPGEFADADAALLATADGLLERVRGHFDAQAMHLALEAIWLMLGDANKYFSVQQPWVLRKSESEADQARFRTTLYVTCEVVRIAALLIQPVMPESAGKILDLLGQAPNQRSFAAVGVRLTPGTALPPPTGVFPRYQPPQPPEGK.

The 'HIGH' region signature appears at 11 to 21; it reads AYPNAAPHVGH. The 'KMSKS' region motif lies at 299-303; sequence KMSKS. Lys302 contacts ATP. The tract at residues 500 to 519 is disordered; sequence LPPPTGVFPRYQPPQPPEGK.

Belongs to the class-I aminoacyl-tRNA synthetase family. MetG type 2B subfamily. In terms of assembly, monomer.

It is found in the cytoplasm. The enzyme catalyses tRNA(Met) + L-methionine + ATP = L-methionyl-tRNA(Met) + AMP + diphosphate. Functionally, is required not only for elongation of protein synthesis but also for the initiation of all mRNA translation through initiator tRNA(fMet) aminoacylation. This chain is Methionine--tRNA ligase (metG), found in Mycobacterium tuberculosis (strain CDC 1551 / Oshkosh).